A 587-amino-acid chain; its full sequence is MTTRVTGNERRGRQLLLRFSGFLSAALTVMALITATRALAPVVAYIAPQRVRSHFMRRAFASGNCRSRRFSVLRSTVGTETRNENNITTPYHSPLPTSRYVYQSSRTLSSRNPALPLESTLMHSNANELTDVELKNLVAHWRDHPVLNPMVTFRSWVVPIKGKMIQAILNSKSLQPYLASRHELLQEMHVRLKIVRDYTDSTDGTEKLILLHPDTPPLSELPADVQQLLRNCQIHENGPVMPTKFTYKDFTASYILSQLLPIAVHPPPTAFETIGHVAHLNLKERHWPYRFLIGQVLLETLPLIESVINKVGEVSGPYRTYDFGLLAGRNDTRVKLTESGVQLQFDLADVYWCSRLSEERQRLLRTFQPGQIIADPFCGVGALCLLAASLPQRNCTIWANDWNPKAVEYLRENARRNHVSDRIERLQCGDAYDFLMDMGLQQHQKASTRSRKEDVTNKDGNHVTPTEPMRLPDHVVMNYPVEAPKFLGALRWWPVPPSSRRGSTTRDGGIGSVIVPRVHVYTFARADPTTDRDAEEVAVDLVAANLLPLGNTIHCRTEMNEDYDCDIQVHPVRDVAPGKVVLCGDFR.

Residues arginine 360 and 430–431 each bind S-adenosyl-L-methionine; that span reads DA. Residues 446–469 form a disordered region; sequence ASTRSRKEDVTNKDGNHVTPTEPM. Residues 450–461 are compositionally biased toward basic and acidic residues; it reads SRKEDVTNKDGN. Asparagine 478 lines the S-adenosyl-L-methionine pocket.

Belongs to the class I-like SAM-binding methyltransferase superfamily. TRM5/TYW2 family. Monomer.

The protein resides in the mitochondrion matrix. Its subcellular location is the nucleus. The protein localises to the cytoplasm. It carries out the reaction guanosine(37) in tRNA + S-adenosyl-L-methionine = N(1)-methylguanosine(37) in tRNA + S-adenosyl-L-homocysteine + H(+). Its function is as follows. Specifically methylates the N1 position of guanosine-37 in various cytoplasmic and mitochondrial tRNAs. Methylation is not dependent on the nature of the nucleoside 5' of the target nucleoside. This is the first step in the biosynthesis of wybutosine (yW), a modified base adjacent to the anticodon of tRNAs and required for accurate decoding. This is tRNA (guanine(37)-N(1))-methyltransferase 2 from Phaeodactylum tricornutum (strain CCAP 1055/1).